The following is a 479-amino-acid chain: Kynurenine 3-monooxygenase (479 aa).

It belongs to the aromatic-ring hydroxylase family. KMO subfamily. The cofactor is FAD.

The protein resides in the mitochondrion outer membrane. It carries out the reaction L-kynurenine + NADPH + O2 + H(+) = 3-hydroxy-L-kynurenine + NADP(+) + H2O. The protein operates within cofactor biosynthesis; NAD(+) biosynthesis; quinolinate from L-kynurenine: step 1/3. Catalyzes the hydroxylation of L-kynurenine (L-Kyn) to form 3-hydroxy-L-kynurenine (L-3OHKyn). Required for synthesis of quinolinic acid. The chain is Kynurenine 3-monooxygenase from Chaetomium globosum (strain ATCC 6205 / CBS 148.51 / DSM 1962 / NBRC 6347 / NRRL 1970) (Soil fungus).